The sequence spans 376 residues: Phosphoglycerate kinase (376 aa).

(2R)-3-phosphoglycerate is bound by residues valine 1, aspartate 2, phenylalanine 3, asparagine 4, arginine 17, serine 40, histidine 41, glycine 43, arginine 44, leucine 99, arginine 100, histidine 147, and arginine 148. ADP is bound at residue glycine 191. Glycine 191 serves as a coordination point for CDP. Alanine 192 and lysine 193 together coordinate AMP. Alanine 192 provides a ligand contact to ATP. Position 192 (alanine 192) interacts with Mg(2+). Aspartate 196 provides a ligand contact to CDP. Residue aspartate 196 coordinates Mg(2+). Lysine 197 is an AMP binding site. Lysine 197 provides a ligand contact to ATP. An ADP-binding site is contributed by glycine 215. Position 215 (glycine 215) interacts with CDP. Residues glycine 216 and glycine 290 each coordinate AMP. Residues glycine 216 and glycine 290 each contribute to the ATP site. Residues glycine 315 and phenylalanine 320 each coordinate CDP. Phenylalanine 320 contributes to the ADP binding site. Glutamate 321 contributes to the AMP binding site. ATP contacts are provided by glutamate 321, aspartate 352, and threonine 353. Residue aspartate 352 coordinates Mg(2+).

This sequence belongs to the phosphoglycerate kinase family. Monomer. Mg(2+) serves as cofactor.

It catalyses the reaction (2R)-3-phosphoglycerate + ATP = (2R)-3-phospho-glyceroyl phosphate + ADP. It functions in the pathway carbohydrate degradation; glycolysis; pyruvate from D-glyceraldehyde 3-phosphate: step 2/5. In Glaucoma chattoni, this protein is Phosphoglycerate kinase (PGK).